The following is an 817-amino-acid chain: DNA ligase (817 aa).

NAD(+) is bound by residues 45 to 49 (DVEYD), 94 to 95 (SI), and glutamate 131. Residue lysine 133 is the N6-AMP-lysine intermediate of the active site. Positions 154, 193, 311, and 335 each coordinate NAD(+). Zn(2+)-binding residues include cysteine 444, cysteine 447, cysteine 462, and cysteine 468. The 85-residue stretch at 733-817 (AEEGVLDGKT…LLKKPAGDQA (85 aa)) folds into the BRCT domain.

Belongs to the NAD-dependent DNA ligase family. LigA subfamily. Requires Mg(2+) as cofactor. Mn(2+) serves as cofactor.

The catalysed reaction is NAD(+) + (deoxyribonucleotide)n-3'-hydroxyl + 5'-phospho-(deoxyribonucleotide)m = (deoxyribonucleotide)n+m + AMP + beta-nicotinamide D-nucleotide.. DNA ligase that catalyzes the formation of phosphodiester linkages between 5'-phosphoryl and 3'-hydroxyl groups in double-stranded DNA using NAD as a coenzyme and as the energy source for the reaction. It is essential for DNA replication and repair of damaged DNA. The protein is DNA ligase of Ralstonia pickettii (strain 12J).